We begin with the raw amino-acid sequence, 205 residues long: Small ribosomal subunit protein uS3c (205 aa).

Positions 37 to 106 (IRQLLRDYVL…TWRISLVEVS (70 aa)) constitute a KH type-2 domain.

Belongs to the universal ribosomal protein uS3 family. Part of the 30S ribosomal subunit.

Its subcellular location is the plastid. It is found in the chloroplast. The sequence is that of Small ribosomal subunit protein uS3c (rps3) from Cyanidioschyzon merolae (strain NIES-3377 / 10D) (Unicellular red alga).